Consider the following 249-residue polypeptide: Triosephosphate isomerase (249 aa).

9–11 (NWK) contacts substrate. His95 acts as the Electrophile in catalysis. The active-site Proton acceptor is Glu166. Residues Gly172, Ser211, and 232-233 (GG) contribute to the substrate site.

The protein belongs to the triosephosphate isomerase family. As to quaternary structure, homodimer.

It localises to the cytoplasm. The enzyme catalyses D-glyceraldehyde 3-phosphate = dihydroxyacetone phosphate. It functions in the pathway carbohydrate biosynthesis; gluconeogenesis. It participates in carbohydrate degradation; glycolysis; D-glyceraldehyde 3-phosphate from glycerone phosphate: step 1/1. Functionally, involved in the gluconeogenesis. Catalyzes stereospecifically the conversion of dihydroxyacetone phosphate (DHAP) to D-glyceraldehyde-3-phosphate (G3P). In Legionella pneumophila (strain Lens), this protein is Triosephosphate isomerase.